The primary structure comprises 423 residues: LysM domain-containing GPI-anchored protein 3 (423 aa).

The first 24 residues, 1 to 24 (MKNPEKPLLLFLILASSLASMATA), serve as a signal peptide directing secretion. 4 disulfide bridges follow: Cys-31–Cys-97, Cys-37–Cys-160, Cys-95–Cys-158, and Cys-97–Cys-160. The LysM 1 domain maps to 107 to 154 (THYKTRTSDTLGSIADSVYGGLVSPEQIQVANSETDLSVLDVGTKLVI). Asn-162 is a glycosylation site (N-linked (GlcNAc...) asparagine). The LysM 2 domain maps to 173–216 (LSYVVRGIDTMAGIAKRFSTSVTDLTNVNAMGAPDINPGDILAV). 2 cysteine pairs are disulfide-bonded: Cys-221–Cys-253 and Cys-248–Cys-276. N-linked (GlcNAc...) asparagine glycosylation occurs at Asn-238. Asn-285 carries N-linked (GlcNAc...) asparagine glycosylation. The GPI-anchor amidated glycine moiety is linked to residue Gly-394. Positions 395-423 (GSISIASCPLSYYSFIALLIPIGSCFFVF) are cleaved as a propeptide — removed in mature form.

As to quaternary structure, interacts with peptidoglycans.

It is found in the cell membrane. In terms of biological role, required as a cell surface receptor for peptidoglycan (PGN) elicitor signaling leading to innate immunity. Plays an essential role in detecting PGNs and restricting bacterial growth (of Pseudomonas syringae pv. tomato DC3000 for example). The sequence is that of LysM domain-containing GPI-anchored protein 3 (LYM3) from Arabidopsis thaliana (Mouse-ear cress).